The primary structure comprises 373 residues: Sterol-4-alpha-carboxylate 3-dehydrogenase, decarboxylating (373 aa).

The residue at position 1 (methionine 1) is an N-acetylmethionine. The residue at position 22 (threonine 22) is a Phosphothreonine. Catalysis depends on tyrosine 172, which acts as the Proton acceptor. Lysine 176 is an NAD(+) binding site. Residues 298–318 traverse the membrane as a helical segment; sequence WVAYYLALLLSLLVMVISPVI. Positions 370–373 match the Prevents secretion from ER motif; the sequence is RRVK.

The protein belongs to the 3-beta-HSD family. As to quaternary structure, homodimer. As to expression, brain, heart, liver, lung, kidney, skin and placenta.

It localises to the endoplasmic reticulum membrane. It is found in the lipid droplet. The catalysed reaction is a 3beta-hydroxysteroid-4alpha-carboxylate + NADP(+) = a 3-oxosteroid + CO2 + NADPH. The enzyme catalyses a 3beta-hydroxysteroid-4alpha-carboxylate + NAD(+) = a 3-oxosteroid + CO2 + NADH. It catalyses the reaction 4alpha-carboxyzymosterol + NADP(+) = zymosterone + CO2 + NADPH. It carries out the reaction 4alpha-carboxy-4beta-methyl-5alpha-cholest-8-en-3beta-ol + NADP(+) = 4alpha-methyl-5alpha-cholest-8-en-3-one + CO2 + NADPH. The catalysed reaction is 4alpha-carboxy-5alpha-cholest-8-ene-3beta-ol + NADP(+) = 5alpha-cholest-8-en-3-one + CO2 + NADPH. The enzyme catalyses 4beta-methylzymosterol-4alpha-carboxylate + NADP(+) = 3-dehydro-4-methylzymosterol + CO2 + NADPH. It catalyses the reaction 4beta-methylzymosterol-4alpha-carboxylate + NAD(+) = 3-dehydro-4-methylzymosterol + CO2 + NADH. It carries out the reaction 4alpha-carboxy-5alpha-cholest-8-ene-3beta-ol + NAD(+) = 5alpha-cholest-8-en-3-one + CO2 + NADH. The catalysed reaction is 4alpha-carboxy-4beta-methyl-5alpha-cholest-8-en-3beta-ol + NAD(+) = 4alpha-methyl-5alpha-cholest-8-en-3-one + CO2 + NADH. The enzyme catalyses 4alpha-carboxyzymosterol + NAD(+) = zymosterone + CO2 + NADH. It participates in steroid biosynthesis; zymosterol biosynthesis; zymosterol from lanosterol: step 4/6. Functionally, catalyzes the NAD(P)(+)-dependent oxidative decarboxylation of the C4 methyl groups of 4-alpha-carboxysterols in post-squalene cholesterol biosynthesis. Also plays a role in the regulation of the endocytic trafficking of EGFR. The sequence is that of Sterol-4-alpha-carboxylate 3-dehydrogenase, decarboxylating (NSDHL) from Homo sapiens (Human).